We begin with the raw amino-acid sequence, 291 residues long: Ribonuclease Z (291 aa).

Positions 61, 63, 65, 66, 133, 201, and 257 each coordinate Zn(2+). The active-site Proton acceptor is the D65.

Belongs to the RNase Z family. In terms of assembly, homodimer. Zn(2+) is required as a cofactor.

The enzyme catalyses Endonucleolytic cleavage of RNA, removing extra 3' nucleotides from tRNA precursor, generating 3' termini of tRNAs. A 3'-hydroxy group is left at the tRNA terminus and a 5'-phosphoryl group is left at the trailer molecule.. Zinc phosphodiesterase, which displays some tRNA 3'-processing endonuclease activity. Probably involved in tRNA maturation, by removing a 3'-trailer from precursor tRNA. The chain is Ribonuclease Z from Saccharolobus solfataricus (strain ATCC 35092 / DSM 1617 / JCM 11322 / P2) (Sulfolobus solfataricus).